A 108-amino-acid chain; its full sequence is Large ribosomal subunit protein bL31B (108 aa).

Residues 81–108 (KPAQPVQAPAEEGPVVKGKKKAPAKKKK) are disordered. Residues 97 to 108 (KGKKKAPAKKKK) show a composition bias toward basic residues.

Belongs to the bacterial ribosomal protein bL31 family. Type B subfamily. Part of the 50S ribosomal subunit.

In Chlamydia caviae (strain ATCC VR-813 / DSM 19441 / 03DC25 / GPIC) (Chlamydophila caviae), this protein is Large ribosomal subunit protein bL31B.